The chain runs to 161 residues: Nucleotide-binding protein Gbem_0619 (161 aa).

The protein belongs to the YajQ family.

Nucleotide-binding protein. In Citrifermentans bemidjiense (strain ATCC BAA-1014 / DSM 16622 / JCM 12645 / Bem) (Geobacter bemidjiensis), this protein is Nucleotide-binding protein Gbem_0619.